A 160-amino-acid chain; its full sequence is RNA-binding protein 3 (160 aa).

The RRM domain maps to 6 to 84; that stretch reads GKLFVGGLNF…RQIRVDHAGK (79 aa). Arginine 47 bears the Omega-N-methylarginine mark. Residues 81 to 116 are disordered; it reads HAGKSARGSRGGAFGSYERGRGYPRGGGDQGYGSGR. Positions 103–114 are enriched in gly residues; it reads YPRGGGDQGYGS. Arginine 105 is subject to Asymmetric dimethylarginine; alternate. Arginine 105 is modified (dimethylated arginine; alternate). The residue at position 105 (arginine 105) is an Omega-N-methylarginine; alternate. Residues arginine 120 and arginine 134 each carry the omega-N-methylarginine modification. Residues 135 to 160 are disordered; that stretch reads SRDYGGRSQGGYDRYSGGNYRDNYDN. Phosphoserine is present on serine 150. Residue tyrosine 158 is modified to Phosphotyrosine.

Interacts with RPL4. Associates with the 60S ribosomal subunits.

It is found in the nucleus. The protein localises to the cytoplasm. Its subcellular location is the cell projection. It localises to the dendrite. Cold-inducible mRNA binding protein that enhances global protein synthesis at both physiological and mild hypothermic temperatures. Reduces the relative abundance of microRNAs, when overexpressed. Enhances phosphorylation of translation initiation factors and active polysome formation. This is RNA-binding protein 3 from Capra hircus (Goat).